A 477-amino-acid chain; its full sequence is Endogenous retrovirus group V member 1 Env polyprotein (477 aa).

A signal peptide spans 1–21 (MTEKFLFLYLSLLPMPLLSQA). Residues 22 to 321 (QWNENSLVSF…NTTQPRQKRA (300 aa)) are Extracellular-facing. Asn-68 carries an N-linked (GlcNAc...) asparagine glycan. The chain crosses the membrane as a helical span at residues 322–342 (LGLILAGMGAAIGMIAPWGGF). Over 343–477 (TYHDVTLRNL…LLSPLWPLSL (135 aa)) the chain is Cytoplasmic.

The protein belongs to the gamma type-C retroviral envelope protein family. Expressed in placenta.

It is found in the membrane. The chain is Endogenous retrovirus group V member 1 Env polyprotein (ERVV-1) from Homo sapiens (Human).